Here is a 250-residue protein sequence, read N- to C-terminus: Putative ankyrin repeat protein RBE_0623 (250 aa).

3 ANK repeats span residues 70–99, 104–134, and 137–166; these read IGDSLPLVAVKNNNLDMLKMLLSCGFEPNT, NCYTPLWYVTYKGYTNSVRKLLEYPINNINE, and GKETPLKSALIHKHTEIAKLLIDKINPDKF.

The sequence is that of Putative ankyrin repeat protein RBE_0623 from Rickettsia bellii (strain RML369-C).